Reading from the N-terminus, the 182-residue chain is MENLTNIFLFLSNENEGIQLNTDIFEANIINLALLIVLVINVAKDVLGSILSARKASILDKIEEADKKLNEADKRFTEARLQWSQANIFGEDLEKKTYQRINAFHESQNLKNKDALLREYFSTLVVLDLKNEQVQKQVRNYVMELALIEVYGVFTKLVANKKFQENYSNYSVLLLEKLIGEK.

The chain crosses the membrane as a helical span at residues 29–47 (IINLALLIVLVINVAKDVL).

This sequence belongs to the ATPase B chain family. In terms of assembly, F-type ATPases have 2 components, F(1) - the catalytic core - and F(0) - the membrane proton channel. F(1) has five subunits: alpha(3), beta(3), gamma(1), delta(1), epsilon(1). F(0) has four main subunits: a(1), b(1), b'(1) and c(10-14). The alpha and beta chains form an alternating ring which encloses part of the gamma chain. F(1) is attached to F(0) by a central stalk formed by the gamma and epsilon chains, while a peripheral stalk is formed by the delta, b and b' chains.

The protein resides in the plastid. It is found in the chloroplast thylakoid membrane. Functionally, f(1)F(0) ATP synthase produces ATP from ADP in the presence of a proton or sodium gradient. F-type ATPases consist of two structural domains, F(1) containing the extramembraneous catalytic core and F(0) containing the membrane proton channel, linked together by a central stalk and a peripheral stalk. During catalysis, ATP synthesis in the catalytic domain of F(1) is coupled via a rotary mechanism of the central stalk subunits to proton translocation. In terms of biological role, component of the F(0) channel, it forms part of the peripheral stalk, linking F(1) to F(0). The protein is ATP synthase subunit b, chloroplastic of Heterosigma akashiwo (strain NIES-293 / 8280G21-1).